Here is a 65-residue protein sequence, read N- to C-terminus: Small ribosomal subunit protein eS17 (65 aa).

This sequence belongs to the eukaryotic ribosomal protein eS17 family.

This Methanocella arvoryzae (strain DSM 22066 / NBRC 105507 / MRE50) protein is Small ribosomal subunit protein eS17.